The primary structure comprises 505 residues: Betaine aldehyde dehydrogenase 1 (505 aa).

Residue 163–172 (WNYPLLMATW) coordinates betaine aldehyde. Residue 240–245 (GSTETG) coordinates NAD(+). Betaine aldehyde is bound by residues Glu-262, 294–297 (QVCS), and Cys-455. Catalysis depends on residues Glu-262 and Cys-296. Residues 262-263 (EL) and Cys-296 contribute to the 4-aminobutanal site. Trp-461 contributes to the 4-aminobutanal binding site. The Microbody targeting signal signature appears at 503-505 (SKL).

This sequence belongs to the aldehyde dehydrogenase family. Homodimer.

Its subcellular location is the peroxisome. It carries out the reaction betaine aldehyde + NAD(+) + H2O = glycine betaine + NADH + 2 H(+). It participates in amine and polyamine biosynthesis; betaine biosynthesis via choline pathway; betaine from betaine aldehyde: step 1/1. Dehydrogenase that can use N-acetyl-gamma-aminobutyraldehyde (NAGABald), gamma-guanidinobutyraldehyde (GGBald), betaine aldehyde (Bet-ald), gamma-aminobutyraldehyde (GAB-ald), acetaldehyde, 4-aminobutylaldehyde (AB-ald), 3-aminopropionaldehyde (AP-ald), 4-N-trimethylaminobutyraldehyde (TMAB-ald) and 3-N-trimethylaminopropionaldehyde (TMAP-ald) as substrates. Catalyzes the oxidation of GAB-ald more efficiently than Bet-ald. May convert acetaldehyde into acetate, thus facilitating the production of acetyl-CoA in peroxisomes under anaerobic conditions. In Oryza sativa subsp. japonica (Rice), this protein is Betaine aldehyde dehydrogenase 1 (BADH1).